Here is a 335-residue protein sequence, read N- to C-terminus: tRNA N6-adenosine threonylcarbamoyltransferase (335 aa).

His-111 and His-115 together coordinate Fe cation. Residues 133-137, Asp-166, Gly-179, and Asn-276 each bind substrate; that span reads LISGG. Asp-301 is a binding site for Fe cation.

Belongs to the KAE1 / TsaD family. The cofactor is Fe(2+).

Its subcellular location is the cytoplasm. It catalyses the reaction L-threonylcarbamoyladenylate + adenosine(37) in tRNA = N(6)-L-threonylcarbamoyladenosine(37) in tRNA + AMP + H(+). Its function is as follows. Required for the formation of a threonylcarbamoyl group on adenosine at position 37 (t(6)A37) in tRNAs that read codons beginning with adenine. Is involved in the transfer of the threonylcarbamoyl moiety of threonylcarbamoyl-AMP (TC-AMP) to the N6 group of A37, together with TsaE and TsaB. TsaD likely plays a direct catalytic role in this reaction. The chain is tRNA N6-adenosine threonylcarbamoyltransferase from Wolbachia sp. subsp. Drosophila simulans (strain wRi).